Consider the following 1397-residue polypeptide: Probable cyclin-dependent serine/threonine-protein kinase DDB_G0292550 (1397 aa).

The Protein kinase domain occupies 4–287 (FQIIELIGSG…TKEALNHPWF (284 aa)). Residues 10–18 (IGSGSYGKV) and lysine 33 contribute to the ATP site. Aspartate 124 functions as the Proton acceptor in the catalytic mechanism. Disordered regions lie at residues 412–567 (NNNN…NNNN), 671–728 (PLSI…NNGF), 763–831 (NEMG…NGNN), 845–949 (NNNN…YANH), 996–1101 (NGLA…NTHN), 1115–1174 (NNGF…NSPV), 1227–1324 (NSAS…SFGL), and 1340–1397 (KKKK…IVLD). Positions 676 to 715 (SQHHNTSSSDTHNNNNNNYNNNNNNNNNINNNNINSIHNQ) are enriched in low complexity. 4 stretches are compositionally biased toward low complexity: residues 845 to 941 (NNNN…NGNG), 1012 to 1021 (NSNNNNSGNN), 1028 to 1101 (NTFN…NTHN), and 1115 to 1155 (NNGF…TKNN). A compositionally biased stretch (polar residues) spans 1156 to 1171 (TQFGPNILSSTQTSHN). Low complexity-rich tracts occupy residues 1253–1321 (NNNN…NNNS) and 1354–1380 (SSSQQSQTQQQHQIQQQSQTQQQSQTQ).

It belongs to the protein kinase superfamily. CMGC Ser/Thr protein kinase family. CDC2/CDKX subfamily.

The enzyme catalyses L-seryl-[protein] + ATP = O-phospho-L-seryl-[protein] + ADP + H(+). The catalysed reaction is L-threonyl-[protein] + ATP = O-phospho-L-threonyl-[protein] + ADP + H(+). The protein is Probable cyclin-dependent serine/threonine-protein kinase DDB_G0292550 of Dictyostelium discoideum (Social amoeba).